The sequence spans 184 residues: Probable sensory rhodopsin transducer (184 aa).

Helical transmembrane passes span 14 to 34 and 52 to 72; these read TLGVGAVLVLVLATLAVVNVY and GLVSILLIVAVALLFVATIIG. The region spanning 73-125 is the HAMP domain; that stretch reads RERTAAVETLAAQARQIEQGELDVDLATNRTDDVGDIYRALAVLRDSEQLDRQ.

This sequence belongs to the methyl-accepting chemotaxis (MCP) protein family. Interacts with Xop2/SRM.

It is found in the membrane. Its function is as follows. The HtrM-Xop2/SRM complex may interact with CheB or CheR and modulate their availability to Sop1 or Sop2. This Haloarcula marismortui (strain ATCC 43049 / DSM 3752 / JCM 8966 / VKM B-1809) (Halobacterium marismortui) protein is Probable sensory rhodopsin transducer (htrM).